The chain runs to 300 residues: Ornithine carbamoyltransferase (300 aa).

Carbamoyl phosphate-binding positions include 49 to 52 (STRT), Gln-76, Arg-100, and 127 to 130 (HPCQ). L-ornithine contacts are provided by residues Asn-158, Asp-218, and 222–223 (SM). Carbamoyl phosphate is bound by residues 258-259 (CL) and Arg-286.

This sequence belongs to the aspartate/ornithine carbamoyltransferase superfamily. OTCase family.

Its subcellular location is the cytoplasm. It catalyses the reaction carbamoyl phosphate + L-ornithine = L-citrulline + phosphate + H(+). The protein operates within amino-acid biosynthesis; L-arginine biosynthesis; L-arginine from L-ornithine and carbamoyl phosphate: step 1/3. Reversibly catalyzes the transfer of the carbamoyl group from carbamoyl phosphate (CP) to the N(epsilon) atom of ornithine (ORN) to produce L-citrulline. The protein is Ornithine carbamoyltransferase of Nitratidesulfovibrio vulgaris (strain ATCC 29579 / DSM 644 / CCUG 34227 / NCIMB 8303 / VKM B-1760 / Hildenborough) (Desulfovibrio vulgaris).